The chain runs to 343 residues: Putative KilA-N domain-containing protein R904 (343 aa).

The KilA-N domain occupies 51–157 (EFSWGNYLNL…IKASVIINDY (107 aa)). Residues 159-279 (AKQMFKEHEK…NAVKEYKELY (121 aa)) adopt a coiled-coil conformation.

The polypeptide is Putative KilA-N domain-containing protein R904 (Acanthamoeba polyphaga mimivirus (APMV)).